Here is a 317-residue protein sequence, read N- to C-terminus: AT-hook motif nuclear-localized protein 22 (317 aa).

Disordered regions lie at residues 22 to 41 and 48 to 106; these read HHQF…HDID and LKRD…KPPI. Over residues 26–35 the composition is skewed to low complexity; sequence QHQQQQQQQN. Residues 48 to 64 show a composition bias toward basic and acidic residues; it reads LKRDRDADIDPNEHSSA. Residues 72–84 show a composition bias toward gly residues; the sequence is GSGGESGGGGGGD. Residues 89 to 101 constitute a DNA-binding region (a.T hook); sequence RRPRGRPAGSKNK. The 141-residue stretch at 113–253 folds into the PPC domain; it reads ANALKSHVME…EDDQEEQTAG (141 aa). Positions 258–285 are disordered; sequence NIDGNATMGGGTQTQTQTQQQQQQQLMQ. The span at 270-282 shows a compositional bias: low complexity; it reads QTQTQTQQQQQQQ.

As to quaternary structure, homodimer. Interacts with HDA1/HDA19, HDA6 and HDA9. As to expression, expressed at the hypocotyl-root transition zone and the root hair zone. Also detected in the inflorescence.

The protein localises to the nucleus. In terms of biological role, transcription factor that specifically binds AT-rich DNA sequences related to the nuclear matrix attachment regions (MARs). Binds an AT-rich DNA sequences in the FLOWERING LOCUS T (FT) promoter. Acts redundantly with AHL18, AHL27 and AHL29 in the regulation of flowering and regulation of the hypocotyl elongation. Plays a role in both photo- and skotomorphogenesis. Acts as a chromatin remodeling factor that modifies the architecture of FLOWERING LOCUS T (FT) chromatin by modulating both H3 acetylation and methylation leading to the regulation of FT expression during flowering induction. This Arabidopsis thaliana (Mouse-ear cress) protein is AT-hook motif nuclear-localized protein 22.